Here is a 585-residue protein sequence, read N- to C-terminus: Putative sulfur deprivation response regulator (585 aa).

5 consecutive transmembrane segments (helical) span residues 5 to 25 (VVDADVCLFAASTLLLLRGII), 30 to 50 (AFAGLANDSIVSIALMMMIAA), 83 to 103 (VASVSAVMNNTPLVAVMIPVV), 117 to 137 (FMMPLSYSAILGGLCTIIGTS), and 162 to 182 (IIGLPLTVAGGIYVVLFSPLL). 2 RCK C-terminal domains span residues 189–274 (MMAA…LPGL) and 288–372 (ETVA…STEW). Helical transmembrane passes span 389-409 (LALFMSLGIFIALIVLNSMDV), 411-431 (PLSTTALVCLFAYLITGVLTV), 442-462 (ILLTVAGGFGVAKAMTVTGLA), 482-502 (VAAIYASTSLLTALLSNGAAV), and 561-581 (FGLPLQFVAALITVPICVLYF).

The protein belongs to the CitM (TC 2.A.11) transporter family.

The protein resides in the membrane. Its function is as follows. Not known; mutations in SAC1 produces cells that cannot synthesize arylsulfatase and cannot take up sulfate as rapidly as wild-type cells. SAC1 is necessary for cells to survive sulfur deprivation. This is Putative sulfur deprivation response regulator (SAC1) from Chlamydomonas reinhardtii (Chlamydomonas smithii).